The chain runs to 421 residues: Testin (421 aa).

The 108-residue stretch at 92–199 folds into the PET domain; it reads MILTNPVAAK…GDVKLPCEMD (108 aa). The interval 133–164 is disordered; it reads EKQPVAGSEGAQYRKKQLAKQLPAHDQDPSKC. Over residues 155–164 the composition is skewed to basic and acidic residues; the sequence is PAHDQDPSKC. LIM zinc-binding domains follow at residues 234–297, 299–359, and 362–421; these read YSCY…CDSE, PRCA…NHAV, and QGCH…KMMS.

It belongs to the prickle / espinas / testin family. As to quaternary structure, interacts via LIM domain 1 with ZYX. Interacts (via LIM domain 3) with ENAH and VASP. Interacts with ALKBH4, talin, actin, alpha-actinin, GRIP1 and PXN. Interacts (via LIM domain 2) with ACTL7A (via N-terminus). Heterodimer with ACTL7A; the heterodimer interacts with ENAH to form a heterotrimer.

The protein localises to the cytoplasm. It localises to the cell junction. It is found in the focal adhesion. Scaffold protein that may play a role in cell adhesion, cell spreading and in the reorganization of the actin cytoskeleton. Plays a role in the regulation of cell proliferation. May act as a tumor suppressor. This is Testin (TES) from Callithrix jacchus (White-tufted-ear marmoset).